Reading from the N-terminus, the 114-residue chain is Biofilm growth-associated repressor (114 aa).

Residues 17-111 (DMEKRANEVA…ALYTIFCTQE (95 aa)) form the HTH arsR-type domain. The H-T-H motif DNA-binding region spans 51–74 (VGELEQQIGIGQPTLSQQLGVLRE).

Its function is as follows. Represses an operon that probably comprises itself, PD_1892, PD_1893, PD_1894 and blh. Binds to a palindromic AT-rich sequence spanning the -10 region of the blh promoter and blocks transcription of the operon. This Xylella fastidiosa (strain Temecula1 / ATCC 700964) protein is Biofilm growth-associated repressor (bigR).